Reading from the N-terminus, the 235-residue chain is Large ribosomal subunit protein uL1 (235 aa).

Belongs to the universal ribosomal protein uL1 family. As to quaternary structure, part of the 50S ribosomal subunit.

Functionally, binds directly to 23S rRNA. The L1 stalk is quite mobile in the ribosome, and is involved in E site tRNA release. In terms of biological role, protein L1 is also a translational repressor protein, it controls the translation of the L11 operon by binding to its mRNA. This Synechococcus sp. (strain CC9311) protein is Large ribosomal subunit protein uL1.